Consider the following 251-residue polypeptide: Adenosylcobinamide-GDP ribazoletransferase (251 aa).

A run of 6 helical transmembrane segments spans residues 36–56 (LYPF…FVLS), 60–80 (VPIM…TGFL), 110–130 (VGAF…AGIF), 181–201 (EIIL…TLGI), 202–222 (NYLI…LKVK), and 231–251 (DVAG…LGII).

It belongs to the CobS family. It depends on Mg(2+) as a cofactor.

It is found in the cell membrane. The enzyme catalyses alpha-ribazole + adenosylcob(III)inamide-GDP = adenosylcob(III)alamin + GMP + H(+). It carries out the reaction alpha-ribazole 5'-phosphate + adenosylcob(III)inamide-GDP = adenosylcob(III)alamin 5'-phosphate + GMP + H(+). It participates in cofactor biosynthesis; adenosylcobalamin biosynthesis; adenosylcobalamin from cob(II)yrinate a,c-diamide: step 7/7. In terms of biological role, joins adenosylcobinamide-GDP and alpha-ribazole to generate adenosylcobalamin (Ado-cobalamin). Also synthesizes adenosylcobalamin 5'-phosphate from adenosylcobinamide-GDP and alpha-ribazole 5'-phosphate. This chain is Adenosylcobinamide-GDP ribazoletransferase, found in Clostridium perfringens (strain SM101 / Type A).